Reading from the N-terminus, the 98-residue chain is MSDPRKESLIVERFEMRASTEPKEGELELYSLFSIIFGFLGIMLKYKICLWVSAVCCVAYLSNLKSKDSSVRTILSPVSLSLMGLVMAYFGPNSNLFV.

Transmembrane regions (helical) follow at residues 32–52 (LFSI…CLWV) and 78–98 (VSLS…NLFV).

It belongs to the Asterix family.

It is found in the membrane. The chain is Protein Asterix from Dictyostelium discoideum (Social amoeba).